An 891-amino-acid polypeptide reads, in one-letter code: Dynein axonemal intermediate chain 3 (891 aa).

Residues 1 to 17 are compositionally biased toward basic residues; it reads MAPKQKKKTSRGKKRLK. Residues 1-22 form a disordered region; the sequence is MAPKQKKKTSRGKKRLKPVLAA. WD repeat units lie at residues 395 to 435, 477 to 533, 670 to 709, and 713 to 753; these read ESPD…DRIE, GHKK…PLTP, IHDG…GPLL, and CAPK…HEPA. Residues 818–861 adopt a coiled-coil conformation; that stretch reads LEYVEQRKKIREQEKKEMELEMAKKKVKTYQKSKEQMQAELKMD.

Interacts with ACTR2; this interaction reduces binding of the Arp2/3 complex to the VCA domain of nucleation promoting factors. Part of the multisubunit axonemal dynein complex formed at least of two heavy chains and a number of intermediate and light chains. Found in a associated with the catalytic heavy chain DNAH2, the intermediate chain DNAI4, and the light chain DYNLT1.

It localises to the cytoplasm. In terms of biological role, acts as a negative regulator of cell migration, invasion, and metastasis downstream of p53/TP53, through inhibition of Arp2/3 complex-mediated actin polymerization. Via its association with the multisubunit axonemal dynein complex, is potentially involved in the regulation of cilia function. May play a role in osteogenesis of dental tissue-derived mesenchymal stem cells. The protein is Dynein axonemal intermediate chain 3 of Homo sapiens (Human).